The chain runs to 1726 residues: Transcription elongation factor SPT6 (1726 aa).

3 stretches are compositionally biased toward acidic residues: residues 1 to 14 (MSDFVESEAEESEE), 32 to 49 (EEEDDDEEEEEENLDDQD), and 59 to 80 (NDDDDEEEGEEDEGSDSGDSED). The segment at 1–197 (MSDFVESEAE…DDGQPLKKPK (197 aa)) is disordered. An N-acetylserine modification is found at serine 2. The interaction with IWS1 stretch occupies residues 2-485 (SDFVESEAEE…PKMQNAAKAS (484 aa)). Positions 2–916 (SDFVESEAEE…PPVLRQAVSL (915 aa)) are interaction with PAAF1. Residues 3–51 (DFVESEAEESEEEYNHEGEVVPRVTKKFVEEEDDDEEEEEENLDDQDER) are a coiled coil. A phosphoserine mark is found at serine 7 and serine 12. Phosphoserine is present on residues serine 73, serine 78, and serine 91. The span at 95-105 (RLEDDDFDLIE) shows a compositional bias: acidic residues. Residues 111-122 (KVKRGQKYRRVK) are compositionally biased toward basic residues. Serine 125 carries the post-translational modification Phosphoserine. 3 stretches are compositionally biased toward acidic residues: residues 126–136 (DDDEDDEEEYG), 150–160 (FQDEEGEEGQE), and 169–190 (PDEEEEDDEESDIDDFIVDDDG). Phosphoserine is present on serine 267. The tract at residues 317-1300 (ADWIYRNAFA…NEWKLPKDTY (984 aa)) is interaction with KDM6A. Positions 489-520 (LKRIKEDGDEEGEGEEAEDEEQRGPELKQASR) are disordered. The segment covering 495–509 (DGDEEGEGEEAEDEE) has biased composition (acidic residues). Basic and acidic residues predominate over residues 510–520 (QRGPELKQASR). The residue at position 743 (lysine 743) is an N6-acetyllysine. The S1 motif domain maps to 1213–1282 (WNHFDSGSCP…EKFSADLTCR (70 aa)). Residues 1325 to 1431 (YIKRVIAHPS…FARDLLNHKY (107 aa)) enclose the SH2 domain. Tyrosine 1515 is subject to Phosphotyrosine. Phosphothreonine is present on threonine 1523. Serine 1526 is modified (phosphoserine). 2 positions are modified to phosphothreonine: threonine 1530 and threonine 1532. Residue serine 1535 is modified to Phosphoserine. Residue threonine 1539 is modified to Phosphothreonine. Residues 1633–1726 (PQYHQLQAST…ATPLLDEMDR (94 aa)) form an interaction with histone H2B and H3 region. The interval 1636-1726 (HQLQASTTPQ…ATPLLDEMDR (91 aa)) is disordered. Residues 1639-1664 (QASTTPQSTQAQPQPSSSSRQRQQQP) show a composition bias toward low complexity. N6-acetyllysine is present on lysine 1676. Threonine 1697 is modified (phosphothreonine). Phosphoserine is present on residues serine 1701 and serine 1703. Threonine 1709 and threonine 1718 each carry phosphothreonine.

The protein belongs to the SPT6 family. Interacts with RNA polymerase II and the DRB sensitivity-inducing factor complex (DSIF complex), which is composed of SUPT5H and SUPT4H1 or SUPT4H2. Interacts with PAAF1. Interacts with histone H2B and H3. Interacts (via SH2 domain) with POLR2A phosphorylated at 'Ser-2'. Interacts (via SH2 domain) with SETD1A. Interacts with IWS1, KDM6A and AICDA. Interacts with WDR43. Dephosphorylated at Ser-1530 by the PNUTS-PP1 complex during RNA polymerase II transcription pause-release. In terms of tissue distribution, ubiquitously expressed.

The protein resides in the nucleus. Functionally, histone H3-H4 chaperone that plays a key role in the regulation of transcription elongation and mRNA processing. Enhances the transcription elongation by RNA polymerase II (RNAPII) and is also required for the efficient activation of transcriptional elongation by the HIV-1 nuclear transcriptional activator, Tat. Besides chaperoning histones in transcription, acts to transport and splice mRNA by forming a complex with IWS1 and the C-terminal domain (CTD) of the RNAPII subunit RPB1 (POLR2A). The SUPT6H:IWS1:CTD complex recruits mRNA export factors (ALYREF/THOC4, EXOSC10) as well as histone modifying enzymes (such as SETD2), to ensure proper mRNA splicing, efficient mRNA export and elongation-coupled H3K36 methylation, a signature chromatin mark of active transcription. SUPT6H via its association with SETD1A, regulates both class-switch recombination and somatic hypermutation through formation of H3K4me3 epigenetic marks on activation-induced cytidine deaminase (AICDA) target loci. Promotes the activation of the myogenic gene program by entailing erasure of the repressive H3K27me3 epigenetic mark through stabilization of the chromatin interaction of the H3K27 demethylase KDM6A. The chain is Transcription elongation factor SPT6 (Supt6h) from Mus musculus (Mouse).